We begin with the raw amino-acid sequence, 880 residues long: Leucine--tRNA ligase (880 aa).

The short motif at 46–56 (PYPSGALHMGH) is the 'HIGH' region element. The 'KMSKS' region signature appears at 638-642 (KMSKS). An ATP-binding site is contributed by K641.

It belongs to the class-I aminoacyl-tRNA synthetase family.

Its subcellular location is the cytoplasm. The enzyme catalyses tRNA(Leu) + L-leucine + ATP = L-leucyl-tRNA(Leu) + AMP + diphosphate. The sequence is that of Leucine--tRNA ligase from Xanthomonas axonopodis pv. citri (strain 306).